A 98-amino-acid polypeptide reads, in one-letter code: Protein E7 (98 aa).

The interval 1–37 (MKGQNVTLQDIAIELEDTISPINLHCEEEIETEEVDT) is E7 terminal domain. An LXCXE motif; interaction with host RB1 and TMEM173/STING motif is present at residues 24–28 (LHCEE). The segment at 47-83 (CYACEQVLRLAVVTSTEGIHQLQQLLFDNLFLLCAAC) is a zinc-finger region. The Nuclear export signal motif lies at 65-73 (IHQLQQLLF).

It belongs to the papillomaviridae E7 protein family. Homodimer. Homooligomer. Interacts with host RB1; this interaction induces dissociation of RB1-E2F1 complex thereby disrupting RB1 activity. Interacts with host EP300; this interaction represses EP300 transcriptional activity. Interacts with protein E2; this interaction inhibits E7 oncogenic activity. Interacts with host TMEM173/STING; this interaction impairs the ability of TMEM173/STING to sense cytosolic DNA and promote the production of type I interferon (IFN-alpha and IFN-beta). Post-translationally, highly phosphorylated.

Its subcellular location is the host cytoplasm. It localises to the host nucleus. Functionally, plays a role in viral genome replication by driving entry of quiescent cells into the cell cycle. Stimulation of progression from G1 to S phase allows the virus to efficiently use the cellular DNA replicating machinery to achieve viral genome replication. E7 protein has both transforming and trans-activating activities. Induces the disassembly of the E2F1 transcription factor from RB1, with subsequent transcriptional activation of E2F1-regulated S-phase genes. Interferes with host histone deacetylation mediated by HDAC1 and HDAC2, leading to transcription activation. Also plays a role in the inhibition of both antiviral and antiproliferative functions of host interferon alpha. Interaction with host TMEM173/STING impairs the ability of TMEM173/STING to sense cytosolic DNA and promote the production of type I interferon (IFN-alpha and IFN-beta). In Bos taurus papillomavirus 4 (Bovine papillomavirus 4), this protein is Protein E7.